The following is a 643-amino-acid chain: MAAAMIWWPRFLLLLCLTCKGSTFYVPGVAPINFHQNDPVEIKAVKLTSSRTQLPYEYYSLPFCQPIKITYKAENLGEVLRGDRIVNTPFQVLMNSEKKCEVLCNQSNKPITLTVEQSRLVAERITEEYYVHLIADNLPVATRLELYSSNRDSDDKKKEKDVQFEHGYRLGFTDVNKIYLHNHLSFILYYHREDMEEDQEHTYRVVRFEVIPQSIRLEDLKTGEKSSCTLPEGANSLPQEIDPTKENQLYFTYSVHWEESDIKWASRWDTYLTMSDVQIHWFSIINSVVVVFFLSGILSMIIIRTLRKDIANYNKEDDIEDTMEESGWKLVHGDVFRPPQYPMILSSLLGSGIQLFCMILIVIFVAMLGMLSPSSRGALMTTACFLFMFMGVFGGFSAGRLYRTLKGHRWKKGAFCTATLYPGVVFGICFVLNCFIWGKHSSGAVPFPTMVALLCMWFGISLPLVYLGYYFGFRKQPYDNPVRTNQIPRQIPEQRWYMNRFVGILMAGILPFGAMFIELFFIFSAIWENQFYYLFGFLFLVFIILVVSCSQISIVMVYFQLCAEDYRWWWRNFLVSGGSAFYVLVYAIFYFVNKLDIVEFIPSLLYFGYTTLMVLSFWLLTGTIGFYAAYMFVRKIYAAVKID.

Positions 1-23 (MAAAMIWWPRFLLLLCLTCKGST) are cleaved as a signal peptide. Over 24–282 (FYVPGVAPIN…TMSDVQIHWF (259 aa)) the chain is Extracellular. A helical membrane pass occupies residues 283-303 (SIINSVVVVFFLSGILSMIII). Residues 304–347 (RTLRKDIANYNKEDDIEDTMEESGWKLVHGDVFRPPQYPMILSS) are Cytoplasmic-facing. Tyrosine 313 bears the Phosphotyrosine mark. A helical membrane pass occupies residues 348–368 (LLGSGIQLFCMILIVIFVAML). Over 369 to 377 (GMLSPSSRG) the chain is Extracellular. Residues 378-398 (ALMTTACFLFMFMGVFGGFSA) form a helical membrane-spanning segment. Over 399-417 (GRLYRTLKGHRWKKGAFCT) the chain is Cytoplasmic. A helical transmembrane segment spans residues 418–438 (ATLYPGVVFGICFVLNCFIWG). The Extracellular segment spans residues 439–450 (KHSSGAVPFPTM). A helical membrane pass occupies residues 451–471 (VALLCMWFGISLPLVYLGYYF). Over 472–502 (GFRKQPYDNPVRTNQIPRQIPEQRWYMNRFV) the chain is Cytoplasmic. Residues 503 to 523 (GILMAGILPFGAMFIELFFIF) traverse the membrane as a helical segment. Topologically, residues 524-536 (SAIWENQFYYLFG) are extracellular. Residues 537-557 (FLFLVFIILVVSCSQISIVMV) traverse the membrane as a helical segment. At 558–571 (YFQLCAEDYRWWWR) the chain is on the cytoplasmic side. Residues 572–592 (NFLVSGGSAFYVLVYAIFYFV) form a helical membrane-spanning segment. At 593–599 (NKLDIVE) the chain is on the extracellular side. The helical transmembrane segment at 600–620 (FIPSLLYFGYTTLMVLSFWLL) threads the bilayer. Residues 621–643 (TGTIGFYAAYMFVRKIYAAVKID) lie on the Cytoplasmic side of the membrane.

It belongs to the nonaspanin (TM9SF) (TC 9.A.2) family.

The protein resides in the membrane. The protein localises to the golgi apparatus. It localises to the early endosome. Associates with proteins harboring glycine-rich transmembrane domains and ensures their efficient localization to the cell surface. This chain is Transmembrane 9 superfamily member 4 (Tm9sf4), found in Mus musculus (Mouse).